The following is a 95-amino-acid chain: Sec-independent protein translocase protein TatA (95 aa).

Residues 1 to 21 form a helical membrane-spanning segment; sequence MGGISIWQLLIIALIVVLLFG. Residues 50 to 61 show a composition bias toward basic and acidic residues; the sequence is KALEDNAADKPA. The interval 50–95 is disordered; that stretch reads KALEDNAADKPAADAAKVTETAKVAETAPVAETAEKKAESKGKEQA. The segment covering 62-81 has biased composition (low complexity); it reads ADAAKVTETAKVAETAPVAE. Positions 82–95 are enriched in basic and acidic residues; sequence TAEKKAESKGKEQA.

The protein belongs to the TatA/E family. The Tat system comprises two distinct complexes: a TatABC complex, containing multiple copies of TatA, TatB and TatC subunits, and a separate TatA complex, containing only TatA subunits. Substrates initially bind to the TatABC complex, which probably triggers association of the separate TatA complex to form the active translocon.

The protein localises to the cell inner membrane. Functionally, part of the twin-arginine translocation (Tat) system that transports large folded proteins containing a characteristic twin-arginine motif in their signal peptide across membranes. TatA could form the protein-conducting channel of the Tat system. The chain is Sec-independent protein translocase protein TatA from Shewanella halifaxensis (strain HAW-EB4).